We begin with the raw amino-acid sequence, 278 residues long: Small ribosomal subunit protein uS3 (278 aa).

One can recognise a KH type-2 domain in the interval 39–107; sequence LRKAIAKKYV…KVQLNIVEIS (69 aa). Positions 244–278 are disordered; that stretch reads AKPKRVTKKAEAEASAEEKPKRAAKKAENITKEEE. The segment covering 251 to 278 has biased composition (basic and acidic residues); that stretch reads KKAEAEASAEEKPKRAAKKAENITKEEE.

It belongs to the universal ribosomal protein uS3 family. As to quaternary structure, part of the 30S ribosomal subunit. Forms a tight complex with proteins S10 and S14.

In terms of biological role, binds the lower part of the 30S subunit head. Binds mRNA in the 70S ribosome, positioning it for translation. The chain is Small ribosomal subunit protein uS3 from Dehalococcoides mccartyi (strain ATCC BAA-2266 / KCTC 15142 / 195) (Dehalococcoides ethenogenes (strain 195)).